We begin with the raw amino-acid sequence, 708 residues long: Glycine--tRNA ligase beta subunit (708 aa).

It belongs to the class-II aminoacyl-tRNA synthetase family. As to quaternary structure, tetramer of two alpha and two beta subunits.

It localises to the cytoplasm. The catalysed reaction is tRNA(Gly) + glycine + ATP = glycyl-tRNA(Gly) + AMP + diphosphate. The polypeptide is Glycine--tRNA ligase beta subunit (Paracidovorax citrulli (strain AAC00-1) (Acidovorax citrulli)).